A 425-amino-acid polypeptide reads, in one-letter code: bZIP transcription factor RISBZ2 (425 aa).

Disordered regions lie at residues 1–50 (MERV…GGGG) and 169–257 (NSIG…AAHL). A compositionally biased stretch (gly residues) spans 30–50 (QGGGGVASGGGGGVAGGGGGG). Polar residues predominate over residues 171 to 182 (IGGNATPVQNML). Residues 213 to 222 (SDDDDMEGEA) are compositionally biased toward acidic residues. The span at 231 to 247 (ADQRLQRRKQSNRESAR) shows a compositional bias: basic and acidic residues. The bZIP domain maps to 232-295 (DQRLQRRKQS…NDAAVDNRVL (64 aa)). The segment at 234–253 (RLQRRKQSNRESARRSRSRK) is basic motif. The tract at residues 260–274 (LEAQVSQLRVENSSL) is leucine-zipper. Positions 334–354 (MPFNSSPSEATSDAAVPIQDD) are disordered.

As to quaternary structure, heterodimer with RISBZ1/BZIP58.

The protein resides in the nucleus. In terms of biological role, transcriptional activator that binds to the DNA specific sequence 5'-GCCACGT[AC]AG-3' found in the alpha-globulin gene promoter. Does not bind to promoters of other major storage genes such as glutelin, prolamin and albumin. Binds to the DNA specific sequence 5'-TGAGTCA-3' found in seed storage protein gene promoters. The chain is bZIP transcription factor RISBZ2 from Oryza sativa subsp. japonica (Rice).